A 706-amino-acid polypeptide reads, in one-letter code: Polyribonucleotide nucleotidyltransferase (706 aa).

Residues D485 and D491 each contribute to the Mg(2+) site. Positions 552 to 611 (PRMLKMKIHPDKIREVIGSGGKTINKIIEDTGVKIDIENDGTIFIAAQTQEAGELALSII) constitute a KH domain. One can recognise an S1 motif domain in the interval 621–689 (GDIFKGKVIK…QQGKVSLSRK (69 aa)).

Belongs to the polyribonucleotide nucleotidyltransferase family. The cofactor is Mg(2+).

It localises to the cytoplasm. It carries out the reaction RNA(n+1) + phosphate = RNA(n) + a ribonucleoside 5'-diphosphate. Its function is as follows. Involved in mRNA degradation. Catalyzes the phosphorolysis of single-stranded polyribonucleotides processively in the 3'- to 5'-direction. This Alkaliphilus oremlandii (strain OhILAs) (Clostridium oremlandii (strain OhILAs)) protein is Polyribonucleotide nucleotidyltransferase.